Reading from the N-terminus, the 495-residue chain is Prenylcysteine oxidase 1-like (495 aa).

The N-terminal stretch at 1–22 (MARAAPLLAVLATVLTTAAAGG) is a signal peptide. N-linked (GlcNAc...) asparagine glycans are attached at residues Asn-185 and Asn-343.

Belongs to the prenylcysteine oxidase family. FAD is required as a cofactor.

The protein resides in the secreted. Functionally, likely to have oxidoreductase activity. Required in the mevalonate pathway to regulate prenylation and enhances the bactericidal activity of neutrophils. The protein is Prenylcysteine oxidase 1-like (Pcyox1l) of Mus musculus (Mouse).